A 761-amino-acid polypeptide reads, in one-letter code: Membrane protein of ER body-like protein (761 aa).

Disordered regions lie at residues 1–85 and 120–162; these read MGSA…GEHT and GSES…RSRE. Acidic residues predominate over residues 22-31; sequence EVEEDDEQIV. Over residues 48-65 the composition is skewed to low complexity; it reads VDSSTITNTSSSSSSSFS. Basic and acidic residues predominate over residues 74 to 85; that stretch reads PDFHSNGDGEHT. The span at 136–154 shows a compositional bias: polar residues; sequence TADLNGEQTQLEPENGSTS. Positions 186 to 206 form a coiled coil; sequence IEEEVDFEDVEYHDVENMMDK. Disordered stretches follow at residues 338–374 and 416–448; these read SSSV…TGSA and QTQQ…PSHG. Residues 416–432 are compositionally biased toward polar residues; sequence QTQQKIDNDDSSTADGN. 5 helical membrane passes run 549 to 569, 573 to 593, 640 to 660, 670 to 690, and 702 to 722; these read IVYG…SAAG, SMLN…ILII, VAIL…YFSF, VASV…AKAH, and ILYY…VGNF.

Belongs to the CCC1 family.

It is found in the endoplasmic reticulum membrane. Its function is as follows. Not essential for the accumulation of ER body components, including PYK10. The polypeptide is Membrane protein of ER body-like protein (MEBL) (Arabidopsis thaliana (Mouse-ear cress)).